A 205-amino-acid polypeptide reads, in one-letter code: MSDPRLSLVAAARKFYQLGWMLGTAGNLSAKVDDHSFWITASGKSKGKLTEQDFVRVELTGKVRELAHRDNRPSAETSIHQVIYCLFPQAQACYHVHSVEANLVSRFARGDKLSLPPLEMLKGLGIWVENPQVFMPVFANYLDVPKIAAEIESRFSTFPPEIPALLISYHGVTVWGESLETTENYLEIVEYIFRYLVAAYQVKPC.

Residues His-95 and His-97 each coordinate Zn(2+).

It belongs to the aldolase class II family. MtnB subfamily. The cofactor is Zn(2+).

The catalysed reaction is 5-(methylsulfanyl)-D-ribulose 1-phosphate = 5-methylsulfanyl-2,3-dioxopentyl phosphate + H2O. It functions in the pathway amino-acid biosynthesis; L-methionine biosynthesis via salvage pathway; L-methionine from S-methyl-5-thio-alpha-D-ribose 1-phosphate: step 2/6. Its function is as follows. Catalyzes the dehydration of methylthioribulose-1-phosphate (MTRu-1-P) into 2,3-diketo-5-methylthiopentyl-1-phosphate (DK-MTP-1-P). This Microcystis aeruginosa (strain NIES-843 / IAM M-2473) protein is Methylthioribulose-1-phosphate dehydratase.